The following is a 381-amino-acid chain: MSLNLFWFLPTHGDGHYLGTEEGARPVDYGYLQQIAQAADRIGFTGVLIPTGRSCEDAWLVAAAMIPVTQRLKFLVALRPSVVSPTVAARQAATLDRLSNGRALFNLVTGSDPTELAGDGVFLDHTERYEASAEFTRVWRRLLEGDTVTYEGKHIRVRDAKLYFPPVQQPRPPLYFGGSSDVAQDLAAEQVDLYLTWGEPPEQVKEKIEQVRAKAAAHGRKVRFGIRLHVIVRETNQEAWQAADRLISHLDDDTIAKAQAALAKTDSVGQHRMASLHNGKRENLEISPNLWAGVGLVRGGAGTALVGDGPTVAARINEYADLGIDSFILSGYPHLEEAYNVGELLFPHLDVAIPEIPQPRPLQVQGEAVANEFIPRKTAQS.

The protein belongs to the SsuD family. Homotetramer.

It carries out the reaction an alkanesulfonate + FMNH2 + O2 = an aldehyde + FMN + sulfite + H2O + 2 H(+). In terms of biological role, catalyzes the desulfonation of aliphatic sulfonates. The polypeptide is Alkanesulfonate monooxygenase (Enterobacter sp. (strain 638)).